The following is a 574-amino-acid chain: Sulfite reductase [NADPH] hemoprotein beta-component (574 aa).

The [4Fe-4S] cluster site is built by cysteine 439, cysteine 445, cysteine 484, and cysteine 488. Cysteine 488 provides a ligand contact to siroheme.

This sequence belongs to the nitrite and sulfite reductase 4Fe-4S domain family. In terms of assembly, alpha(8)-beta(8). The alpha component is a flavoprotein, the beta component is a hemoprotein. It depends on siroheme as a cofactor. The cofactor is [4Fe-4S] cluster.

The catalysed reaction is hydrogen sulfide + 3 NADP(+) + 3 H2O = sulfite + 3 NADPH + 4 H(+). It functions in the pathway sulfur metabolism; hydrogen sulfide biosynthesis; hydrogen sulfide from sulfite (NADPH route): step 1/1. Its function is as follows. Component of the sulfite reductase complex that catalyzes the 6-electron reduction of sulfite to sulfide. This is one of several activities required for the biosynthesis of L-cysteine from sulfate. This chain is Sulfite reductase [NADPH] hemoprotein beta-component, found in Paenibacillus sp. (strain JDR-2).